We begin with the raw amino-acid sequence, 297 residues long: Phosphoribosylaminoimidazole-succinocarboxamide synthase (297 aa).

This sequence belongs to the SAICAR synthetase family.

The enzyme catalyses 5-amino-1-(5-phospho-D-ribosyl)imidazole-4-carboxylate + L-aspartate + ATP = (2S)-2-[5-amino-1-(5-phospho-beta-D-ribosyl)imidazole-4-carboxamido]succinate + ADP + phosphate + 2 H(+). It participates in purine metabolism; IMP biosynthesis via de novo pathway; 5-amino-1-(5-phospho-D-ribosyl)imidazole-4-carboxamide from 5-amino-1-(5-phospho-D-ribosyl)imidazole-4-carboxylate: step 1/2. The protein is Phosphoribosylaminoimidazole-succinocarboxamide synthase of Corynebacterium glutamicum (strain ATCC 13032 / DSM 20300 / JCM 1318 / BCRC 11384 / CCUG 27702 / LMG 3730 / NBRC 12168 / NCIMB 10025 / NRRL B-2784 / 534).